A 695-amino-acid chain; its full sequence is Nucleoprotein (695 aa).

2 coiled-coil regions span residues 316–341 (VNVG…RRHE) and 372–399 (QTLA…VEDQ). Disordered stretches follow at residues 424–458 (QARP…SFVD) and 483–615 (TSRE…AREA). Residues 438–447 (VDDKIEHEST) show a composition bias toward basic and acidic residues. Composition is skewed to polar residues over residues 494–505 (PGQSQDLDNSQG) and 537–552 (TTDS…SDNE). The short motif at 603 to 606 (PSAP) is the PTAP/PSAP motif element.

Belongs to the filoviruses nucleoprotein family. In terms of assembly, homooligomer. Homomultimerizes to form the nucleocapsid. Binds to viral genomic RNA. Interacts with VP35 and VP30 to form the nucleocapsid. Also interacts with VP24 and VP40. Post-translationally, phosphorylated.

The protein resides in the virion. Its subcellular location is the host cytoplasm. Encapsidates the genome, protecting it from nucleases. The encapsidated genomic RNA is termed the nucleocapsid and serves as template for transcription and replication. During replication, encapsidation by NP is coupled to RNA synthesis and all replicative products are resistant to nucleases. The protein is Nucleoprotein (NP) of Lake Victoria marburgvirus (strain Ozolin-75) (MARV).